Here is a 303-residue protein sequence, read N- to C-terminus: UDP-3-O-acyl-N-acetylglucosamine deacetylase (303 aa).

3 residues coordinate Zn(2+): His78, His237, and Asp241. His264 (proton donor) is an active-site residue.

The protein belongs to the LpxC family. The cofactor is Zn(2+).

The catalysed reaction is a UDP-3-O-[(3R)-3-hydroxyacyl]-N-acetyl-alpha-D-glucosamine + H2O = a UDP-3-O-[(3R)-3-hydroxyacyl]-alpha-D-glucosamine + acetate. Its pathway is glycolipid biosynthesis; lipid IV(A) biosynthesis; lipid IV(A) from (3R)-3-hydroxytetradecanoyl-[acyl-carrier-protein] and UDP-N-acetyl-alpha-D-glucosamine: step 2/6. Its function is as follows. Catalyzes the hydrolysis of UDP-3-O-myristoyl-N-acetylglucosamine to form UDP-3-O-myristoylglucosamine and acetate, the committed step in lipid A biosynthesis. The sequence is that of UDP-3-O-acyl-N-acetylglucosamine deacetylase from Pseudomonas entomophila (strain L48).